Here is a 31-residue protein sequence, read N- to C-terminus: Relaxin B chain (31 aa).

Glutamine 1 is subject to Pyrrolidone carboxylic acid.

This sequence belongs to the insulin family. As to quaternary structure, heterodimer of a B chain and an A chain linked by two disulfide bonds.

It is found in the secreted. Relaxin is an ovarian hormone that acts with estrogen to produce dilatation of the birth canal in many mammals. In Phocoenoides dalli dalli (Dall's porpoise), this protein is Relaxin B chain.